We begin with the raw amino-acid sequence, 78 residues long: Large ribosomal subunit protein bL28 (78 aa).

This sequence belongs to the bacterial ribosomal protein bL28 family.

In Parasynechococcus marenigrum (strain WH8102), this protein is Large ribosomal subunit protein bL28.